The following is a 339-amino-acid chain: ATPase GET3 (339 aa).

34–41 (KGGVGKTT) lines the ATP pocket. Aspartate 63 is a catalytic residue. Glutamate 244 and asparagine 271 together coordinate ATP. Positions 282 and 285 each coordinate Zn(2+).

This sequence belongs to the arsA ATPase family. As to quaternary structure, homodimer.

The protein resides in the cytoplasm. The protein localises to the endoplasmic reticulum. In terms of biological role, ATPase required for the post-translational delivery of tail-anchored (TA) proteins to the endoplasmic reticulum. Recognizes and selectively binds the transmembrane domain of TA proteins in the cytosol. This complex then targets to the endoplasmic reticulum by membrane-bound receptors, where the tail-anchored protein is released for insertion. This process is regulated by ATP binding and hydrolysis. ATP binding drives the homodimer towards the closed dimer state, facilitating recognition of newly synthesized TA membrane proteins. ATP hydrolysis is required for insertion. Subsequently, the homodimer reverts towards the open dimer state, lowering its affinity for the membrane-bound receptor, and returning it to the cytosol to initiate a new round of targeting. This Podospora anserina (strain S / ATCC MYA-4624 / DSM 980 / FGSC 10383) (Pleurage anserina) protein is ATPase GET3.